The sequence spans 421 residues: Dihydroorotase (421 aa).

Zn(2+) is bound by residues H59 and H61. Substrate-binding positions include H61–R63 and N93. D150, H177, and H230 together coordinate Zn(2+). N276 provides a ligand contact to substrate. D303 provides a ligand contact to Zn(2+). The active site involves D303. H307 contacts substrate.

Belongs to the metallo-dependent hydrolases superfamily. DHOase family. Class I DHOase subfamily. It depends on Zn(2+) as a cofactor.

The enzyme catalyses (S)-dihydroorotate + H2O = N-carbamoyl-L-aspartate + H(+). It functions in the pathway pyrimidine metabolism; UMP biosynthesis via de novo pathway; (S)-dihydroorotate from bicarbonate: step 3/3. Catalyzes the reversible cyclization of carbamoyl aspartate to dihydroorotate. The polypeptide is Dihydroorotase (Desulfotalea psychrophila (strain LSv54 / DSM 12343)).